A 240-amino-acid chain; its full sequence is tRNA pseudouridine synthase B (240 aa).

Aspartate 48 serves as the catalytic Nucleophile.

This sequence belongs to the pseudouridine synthase TruB family. Type 1 subfamily.

The enzyme catalyses uridine(55) in tRNA = pseudouridine(55) in tRNA. Its function is as follows. Responsible for synthesis of pseudouridine from uracil-55 in the psi GC loop of transfer RNAs. The chain is tRNA pseudouridine synthase B from Bacteroides thetaiotaomicron (strain ATCC 29148 / DSM 2079 / JCM 5827 / CCUG 10774 / NCTC 10582 / VPI-5482 / E50).